We begin with the raw amino-acid sequence, 303 residues long: Bifunctional protein FolD (303 aa).

NADP(+) is bound by residues 175–177 (GVS) and Ile-243.

It belongs to the tetrahydrofolate dehydrogenase/cyclohydrolase family. In terms of assembly, homodimer.

The catalysed reaction is (6R)-5,10-methylene-5,6,7,8-tetrahydrofolate + NADP(+) = (6R)-5,10-methenyltetrahydrofolate + NADPH. The enzyme catalyses (6R)-5,10-methenyltetrahydrofolate + H2O = (6R)-10-formyltetrahydrofolate + H(+). It participates in one-carbon metabolism; tetrahydrofolate interconversion. Catalyzes the oxidation of 5,10-methylenetetrahydrofolate to 5,10-methenyltetrahydrofolate and then the hydrolysis of 5,10-methenyltetrahydrofolate to 10-formyltetrahydrofolate. This Xanthomonas oryzae pv. oryzae (strain PXO99A) protein is Bifunctional protein FolD.